The chain runs to 522 residues: Amine oxidase [flavin-containing] (522 aa).

Residues 1-492 (MTAQNTFDVI…FWERNLPSVG (492 aa)) lie on the Cytoplasmic side of the membrane. Residue C399 is modified to S-8alpha-FAD cysteine. The chain crosses the membrane as a helical; Anchor for type IV membrane protein span at residues 493-513 (GFINFLAASVLSVATAAGMLA). Topologically, residues 514–522 (YQKGLLTRS) are mitochondrial intermembrane.

The protein belongs to the flavin monoamine oxidase family. FAD is required as a cofactor.

Its subcellular location is the mitochondrion outer membrane. It carries out the reaction a secondary aliphatic amine + O2 + H2O = a primary amine + an aldehyde + H2O2. Its function is as follows. Catalyzes the oxidative deamination of biogenic and xenobiotic amines and has important functions in the metabolism of neuroactive and vasoactive amines in the central nervous system and peripheral tissues. Oxidizes both 5-hydroxytryptamine (5-HT) and beta-phenylethylamine (PEA). The polypeptide is Amine oxidase [flavin-containing] (mao) (Oncorhynchus mykiss (Rainbow trout)).